Here is a 415-residue protein sequence, read N- to C-terminus: Corticotropin-releasing factor receptor 1 (415 aa).

Positions 1 to 23 are cleaved as a signal peptide; sequence MARHPQLRLVKALLLLGLNPVSA. The Extracellular portion of the chain corresponds to 24–111; the sequence is SLQDQHCESL…CQEILNEEKK (88 aa). Cystine bridges form between Cys-30–Cys-54, Cys-44–Cys-87, and Cys-68–Cys-102. N-linked (GlcNAc...) asparagine glycosylation is found at Asn-38, Asn-78, and Asn-98. The important for peptide agonist binding stretch occupies residues 99-108; it reads YSECQEILNE. Residues 112 to 142 traverse the membrane as a helical segment; the sequence is SKVHYHVAVIINYLGHCISLVALLVAFVLFL. The Cytoplasmic segment spans residues 143 to 149; the sequence is RLRSIRC. The chain crosses the membrane as a helical span at residues 150–174; the sequence is LRNIIHWNLISAFILRNATWFVVQL. Topologically, residues 175–189 are extracellular; that stretch reads TMSPEVHQSNVGWCR. Cys-188 and Cys-258 are joined by a disulfide. A helical transmembrane segment spans residues 190-218; that stretch reads LVTAAYNYFHVTNFFWMFGEGCYLHTAIV. The Cytoplasmic portion of the chain corresponds to 219-225; the sequence is LTYSTDR. The helical transmembrane segment at 226 to 253 threads the bilayer; it reads LRKWMFICIGWGVPFPIIVAWAIGKLYY. Over 254 to 269 the chain is Extracellular; the sequence is DNEKCWFGKRPGVYTD. A helical membrane pass occupies residues 270 to 295; it reads YIYQGPMILVLLINFIFLFNIVRILM. An important for antagonist binding region spans residues 280–290; that stretch reads LLINFIFLFNI. The Cytoplasmic portion of the chain corresponds to 296-306; that stretch reads TKLRASTTSET. Phosphoserine; by PKA is present on Ser-301. Residues 307-331 traverse the membrane as a helical segment; the sequence is IQYRKAVKATLVLLPLLGITYMLFF. Topologically, residues 332 to 338 are extracellular; the sequence is VNPGEDE. Residues 339–368 form a helical membrane-spanning segment; the sequence is VSRVVFIYFNSFLESFQGFFVSVFYCFLNS. At 369 to 415 the chain is on the cytoplasmic side; the sequence is EVRSAIRKRWHRWQDKHSIRARVARAMSIPTSPTRVSFHSIKQSTAV.

Belongs to the G-protein coupled receptor 2 family. As to quaternary structure, heterodimer; heterodimerizes with GPER1. Interacts (via N-terminal extracellular domain) with CRH and UCN. Interacts with DLG1; this inhibits endocytosis of CRHR1 after agonist binding. C-terminal Ser or Thr residues may be phosphorylated. In terms of processing, phosphorylation at Ser-301 by PKA prevents maximal coupling to Gq-protein, and thereby negatively regulates downstream signaling. Expressed abundantly in the pituitary, cerebral cortex, hippocampus, amygdala and cerebellum.

It localises to the cell membrane. Its subcellular location is the endosome. In terms of biological role, G-protein coupled receptor for CRH (corticotropin-releasing factor) and UCN (urocortin). Has high affinity for CRH and UCN. Ligand binding causes a conformation change that triggers signaling via guanine nucleotide-binding proteins (G proteins) and down-stream effectors, such as adenylate cyclase. Promotes the activation of adenylate cyclase, leading to increased intracellular cAMP levels. Inhibits the activity of the calcium channel CACNA1H. Required for normal embryonic development of the adrenal gland and for normal hormonal responses to stress. Plays a role in the response to anxiogenic stimuli. This chain is Corticotropin-releasing factor receptor 1 (CRHR1), found in Macaca mulatta (Rhesus macaque).